The following is a 348-amino-acid chain: Haptoglobin-related protein (348 aa).

The segment at residues 1–18 is a signal peptide (not cleaved); the sequence is MSDLGAVISLLLWGRQLF. The Sushi domain occupies 34-87; the sequence is FPKPPEIANGYVEHLFRYQCKNYYRLRTEGDGVYTLNDKKQWINKAVGDKLPEC. The 243-residue stretch at 104–346 folds into the Peptidase S1 domain; that stretch reads ILGGHLDAKG…IQHWVQKTIA (243 aa). 2 disulfides stabilise this stretch: Cys251–Cys282 and Cys293–Cys323.

This sequence belongs to the peptidase S1 family. As to expression, in adult liver the amount of HPR mRNA is at the lower limit of detection, therefore the extent of its expression is at most less than 1000-fold that of the HP1F gene. No HPR mRNA can be detected in fetal liver. Expressed in Hep-G2 and leukemia MOLT-4 cell lines.

The protein resides in the secreted. Functionally, primate-specific plasma protein associated with apolipoprotein L-I (apoL-I)-containing high-density lipoprotein (HDL). This HDL particle, termed trypanosome lytic factor-1 (TLF-1), mediates human innate immune protection against many species of African trypanosomes. Binds hemoglobin with high affinity and may contribute to the clearance of cell-free hemoglobin to allow hepatic recycling of heme iron. The sequence is that of Haptoglobin-related protein (HPR) from Homo sapiens (Human).